A 125-amino-acid chain; its full sequence is Secreted RxLR effector protein 22 (125 aa).

The signal sequence occupies residues 1 to 26 (MRLIYSALVTAAAMVAISNGSTPARG). Positions 21–66 (STPARGNEVETRSLRGGNEVDSSMSDDGERAARGGGRVRSQASGVT) are disordered. The RxLR-dEER signature appears at 32–50 (RSLRGGNEVDSSMSDDGER).

The protein belongs to the RxLR effector family.

It is found in the secreted. Its subcellular location is the host nucleus. Its function is as follows. Effector that acts as a broad suppressor of cell death to interrupt plant immunity. Inhibits cell death induced by cell death-inducing proteins, including the PAMP elicitor INF1 from P.infestans. This chain is Secreted RxLR effector protein 22, found in Plasmopara viticola (Downy mildew of grapevine).